We begin with the raw amino-acid sequence, 215 residues long: High mobility group protein B1 (215 aa).

Residue 2–10 coordinates heparin; that stretch reads GKGDPKKPR. Positions 2-97 are sufficient for interaction with HAVCR2; sequence GKGDPKKPRG…KFKDPNAPKR (96 aa). 4 positions are modified to N6-acetyllysine: Lys-3, Lys-7, Lys-8, and Lys-12. Positions 3–15 are LPS binding (delipidated); sequence KGDPKKPRGKMSS. The HMG box 1 DNA-binding region spans 9–79; that stretch reads PRGKMSSYAF…RYEREMKTYI (71 aa). Cysteine sulfonic acid (-SO3H); alternate is present on Cys-23. Cys-23 and Cys-45 form a disulfide bridge. Positions 27-43 match the Nuclear localization signal (NLS) 1 motif; it reads HKKKHPDASVNFSEFSK. Lys-28, Lys-29, and Lys-30 each carry N6-acetyllysine. Lys-28 is covalently cross-linked (Isoglutamyl lysine isopeptide (Lys-Gln) (interchain with Q-?)). A Phosphoserine modification is found at Ser-35. Lys-43 bears the N6-acetyllysine mark. Isoglutamyl lysine isopeptide (Lys-Gln) (interchain with Q-?) cross-links involve residues Lys-43 and Lys-44. Cysteine sulfonic acid (-SO3H); alternate is present on Cys-45. Residue Lys-68 forms an Isoglutamyl lysine isopeptide (Lys-Gln) (interchain with Q-?) linkage. A disordered region spans residues 76-95; that stretch reads KTYIPPKGETKKKFKDPNAP. An LPS binding (Lipid A) region spans residues 80-96; the sequence is PPKGETKKKFKDPNAPK. Residues 83–94 are compositionally biased toward basic and acidic residues; the sequence is GETKKKFKDPNA. Positions 89 to 108 are cytokine-stimulating activity; that stretch reads FKDPNAPKRPPSAFFLFCSE. The residue at position 90 (Lys-90) is an N6-acetyllysine. The segment at residues 95-163 is a DNA-binding region (HMG box 2); that stretch reads PKRPPSAFFL…KYEKDIAAYR (69 aa). Phosphoserine is present on Ser-100. Cys-106 is subject to Cysteine sulfonic acid (-SO3H). N6-acetyllysine is present on residues Lys-127, Lys-128, Lys-141, Lys-172, Lys-173, Lys-177, and Lys-180. A binding to AGER/RAGE region spans residues 150–183; the sequence is KLKEKYEKDIAAYRAKGKPDAAKKGVVKAEKSKK. Over residues 161–179 the composition is skewed to basic and acidic residues; it reads AYRAKGKPDAAKKGVVKAE. Residues 161–215 form a disordered region; that stretch reads AYRAKGKPDAAKKGVVKAEKSKKKKEEEEDEEDEEDEEEEEDEEDEEEEEDDDDE. The Nuclear localization signal (NLS) 2 motif lies at 178–184; sequence AEKSKKK. Lys-180 participates in a covalent cross-link: Isoglutamyl lysine isopeptide (Lys-Gln) (interchain with Q-?). The residue at position 181 (Ser-181) is an ADP-ribosylserine. An N6-acetyllysine mark is found at Lys-182, Lys-183, Lys-184, and Lys-185. Residues Lys-182, Lys-183, and Lys-184 each participate in an isoglutamyl lysine isopeptide (Lys-Gln) (interchain with Q-?) cross-link. The span at 187–215 shows a compositional bias: acidic residues; it reads EEEDEEDEEDEEEEEDEEDEEEEEDDDDE.

The protein belongs to the HMGB family. Interacts (fully reduced HMGB1) with CXCL12; probably in a 1:2 ratio involving two molecules of CXCL12, each interacting with one HMG box of HMGB1; inhibited by glycyrrhizin. Associates with the TLR4:LY96 receptor complex. Component of the RAG complex composed of core components RAG1 and RAG2, and associated component HMGB1 or HMGB2. Interacts (in cytoplasm upon starvation) with BECN1; inhibits the interaction of BECN1 and BCL2 leading to promotion of autophagy. Interacts with KPNA1; involved in nuclear import. Interacts with AGER. Interacts with SREBF1, TLR2, TLR4, TLR9, PTPRZ1, APEX1, FEN1, POLB, TERT. Interacts with IL1B, MSH2, XPA, XPC, HNF1A, TP53. Interacts with CD24; the probable CD24:SIGLEC10 complex is proposed to inhibit HGMB1-mediated tissue damage immune response. Interacts with THBD; prevents HGMB1 interaction with ACER/RAGE and inhibits HGMB1 pro-inflammatory activity. Interacts with HAVCR2; impairs HMGB1 binding to B-DNA and likely HMGB1-mediated innate immune response. Interacts with XPO1; mediating nuclear export. Interacts with receptor RAGE/AGER. Phosphorylated at serine residues. Phosphorylation in both NLS regions is required for cytoplasmic translocation followed by secretion. In terms of processing, acetylated on multiple sites upon stimulation with LPS. Acetylation on lysine residues in the nuclear localization signals (NLS 1 and NLS 2) leads to cytoplasmic localization and subsequent secretion. Acetylation on Lys-3 results in preferential binding to DNA ends and impairs DNA bending activity. Post-translationally, reduction/oxidation of cysteine residues Cys-23, Cys-45 and Cys-106 and a possible intramolecular disulfide bond involving Cys-23 and Cys-45 give rise to different redox forms with specific functional activities in various cellular compartments: 1- fully reduced HMGB1 (HMGB1C23hC45hC106h), 2- disulfide HMGB1 (HMGB1C23-C45C106h) and 3- sulfonyl HMGB1 (HMGB1C23soC45soC106so). Poly-ADP-ribosylated by PARP1 when secreted following stimulation with LPS. In terms of processing, in vitro cleavage by CASP1 is liberating a HMG box 1-containing peptide which may mediate immunogenic activity; the peptide antagonizes apoptosis-induced immune tolerance. Can be proteolytically cleaved by a thrombin:thrombomodulin complex; reduces binding to heparin and pro-inflammatory activities. Post-translationally, forms covalent cross-links mediated by transglutaminase TGM2, between a glutamine and the epsilon-amino group of a lysine residue, forming homopolymers and heteropolymers.

It is found in the nucleus. It localises to the chromosome. Its subcellular location is the cytoplasm. The protein localises to the secreted. The protein resides in the cell membrane. It is found in the endosome. It localises to the endoplasmic reticulum-Golgi intermediate compartment. Functionally, multifunctional redox sensitive protein with various roles in different cellular compartments. In the nucleus is one of the major chromatin-associated non-histone proteins and acts as a DNA chaperone involved in replication, transcription, chromatin remodeling, V(D)J recombination, DNA repair and genome stability. Proposed to be an universal biosensor for nucleic acids. Promotes host inflammatory response to sterile and infectious signals and is involved in the coordination and integration of innate and adaptive immune responses. In the cytoplasm functions as a sensor and/or chaperone for immunogenic nucleic acids implicating the activation of TLR9-mediated immune responses, and mediates autophagy. Acts as a danger-associated molecular pattern (DAMP) molecule that amplifies immune responses during tissue injury. Released to the extracellular environment can bind DNA, nucleosomes, IL-1 beta, CXCL12, AGER isoform 2/sRAGE, lipopolysaccharide (LPS) and lipoteichoic acid (LTA), and activates cells through engagement of multiple surface receptors. In the extracellular compartment fully reduced HMGB1 (released by necrosis) acts as a chemokine, disulfide HMGB1 (actively secreted) as a cytokine, and sulfonyl HMGB1 (released from apoptotic cells) promotes immunological tolerance. Has proangiogenic activity. May be involved in platelet activation. Binds to phosphatidylserine and phosphatidylethanolamide. Bound to RAGE mediates signaling for neuronal outgrowth. May play a role in accumulation of expanded polyglutamine (polyQ) proteins. Nuclear functions are attributed to fully reduced HGMB1. Associates with chromatin and binds DNA with a preference to non-canonical DNA structures such as single-stranded DNA, DNA-containing cruciforms or bent structures, supercoiled DNA and ZDNA. Can bent DNA and enhance DNA flexibility by looping thus providing a mechanism to promote activities on various gene promoters by enhancing transcription factor binding and/or bringing distant regulatory sequences into close proximity. May be involved in nucleotide excision repair (NER), mismatch repair (MMR) and base excision repair (BER) pathways, and double strand break repair such as non-homologous end joining (NHEJ). Involved in V(D)J recombination by acting as a cofactor of the RAG complex: acts by stimulating cleavage and RAG protein binding at the 23 bp spacer of conserved recombination signal sequences (RSS). In vitro can displace histone H1 from highly bent DNA. Can restructure the canonical nucleosome leading to relaxation of structural constraints for transcription factor-binding. Enhances binding of sterol regulatory element-binding proteins (SREBPs) such as SREBF1 to their cognate DNA sequences and increases their transcriptional activities. Facilitates binding of TP53 to DNA. May be involved in mitochondrial quality control and autophagy in a transcription-dependent fashion implicating HSPB1. Can modulate the activity of the telomerase complex and may be involved in telomere maintenance. Its function is as follows. In the cytoplasm proposed to dissociate the BECN1:BCL2 complex via competitive interaction with BECN1 leading to autophagy activation. Involved in oxidative stress-mediated autophagy. Can protect BECN1 and ATG5 from calpain-mediated cleavage and thus proposed to control their proautophagic and proapoptotic functions and to regulate the extent and severity of inflammation-associated cellular injury. In myeloid cells has a protective role against endotoxemia and bacterial infection by promoting autophagy. Involved in endosomal translocation and activation of TLR9 in response to CpG-DNA in macrophages. In terms of biological role, in the extracellular compartment (following either active secretion or passive release)involved in regulation of the inflammatory response. Fully reduced HGMB1 (which subsequently gets oxidized after release) in association with CXCL12 mediates the recruitment of inflammatory cells during the initial phase of tissue injury; the CXCL12:HMGB1 complex triggers CXCR4 homodimerization. Induces the migration of monocyte-derived immature dendritic cells and seems to regulate adhesive and migratory functions of neutrophils implicating AGER/RAGE and ITGAM. Can bind to various types of DNA and RNA including microbial unmethylated CpG-DNA to enhance the innate immune response to nucleic acids. Proposed to act in promiscuous DNA/RNA sensing which cooperates with subsequent discriminative sensing by specific pattern recognition receptors. Promotes extracellular DNA-induced AIM2 inflammasome activation implicating AGER/RAGE. Disulfide HMGB1 binds to transmembrane receptors, such as AGER/RAGE, TLR2, TLR4 and probably TREM1, thus activating their signal transduction pathways. Mediates the release of cytokines/chemokines such as TNF, IL-1, IL-6, IL-8, CCL2, CCL3, CCL4 and CXCL10. Promotes secretion of interferon-gamma by macrophage-stimulated natural killer (NK) cells in concert with other cytokines like IL-2 or IL-12. TLR4 is proposed to be the primary receptor promoting macrophage activation and signaling through TLR4 seems to implicate LY96/MD-2. In bacterial LPS- or LTA-mediated inflammatory responses binds to the endotoxins and transfers them to CD14 for signaling to the respective TLR4:LY96 and TLR2 complexes. Contributes to tumor proliferation by association with ACER/RAGE. Can bind to IL1-beta and signals through the IL1R1:IL1RAP receptor complex. Binding to class A CpG activates cytokine production in plasmacytoid dendritic cells implicating TLR9, MYD88 and AGER/RAGE and can activate autoreactive B cells. Via HMGB1-containing chromatin immune complexes may also promote B cell responses to endogenous TLR9 ligands through a B-cell receptor (BCR)-dependent and ACER/RAGE-independent mechanism. Inhibits phagocytosis of apoptotic cells by macrophages; the function is dependent on poly-ADP-ribosylation and involves binding to phosphatidylserine on the cell surface of apoptotic cells. In adaptive immunity may be involved in enhancing immunity through activation of effector T-cells and suppression of regulatory T (TReg) cells. In contrast, without implicating effector or regulatory T-cells, required for tumor infiltration and activation of T-cells expressing the lymphotoxin LTA:LTB heterotrimer thus promoting tumor malignant progression. Also reported to limit proliferation of T-cells. Released HMGB1:nucleosome complexes formed during apoptosis can signal through TLR2 to induce cytokine production. Involved in induction of immunological tolerance by apoptotic cells; its pro-inflammatory activities when released by apoptotic cells are neutralized by reactive oxygen species (ROS)-dependent oxidation specifically on Cys-106. During macrophage activation by activated lymphocyte-derived self apoptotic DNA (ALD-DNA) promotes recruitment of ALD-DNA to endosomes. The protein is High mobility group protein B1 (HMGB1) of Bos taurus (Bovine).